Here is a 63-residue protein sequence, read N- to C-terminus: Phylloseptin-Az1 (63 aa).

Positions 1-19 (LKKSLFLVVFLGLATLSIC) are cleaved as a signal peptide. Positions 20–41 (EEEKRETEEEEYNQGEDDKSEE) are excised as a propeptide. The residue at position 62 (Phe62) is a Phenylalanine amide.

As to expression, expressed by the skin glands.

The protein resides in the secreted. Its function is as follows. Has antimicrobial activity. The protein is Phylloseptin-Az1 of Pithecopus azureus (Orange-legged monkey tree frog).